We begin with the raw amino-acid sequence, 406 residues long: Transforming growth factor beta regulator 1 (406 aa).

Disordered stretches follow at residues 1 to 28 (MSVLSGLASEPRTPLSSKARMKRLPRKS) and 109 to 144 (SSVGTMQGAGPSTGAEEPFAKKSKKEKKEKGKENSK). Ser-2 carries the post-translational modification N-acetylserine. Thr-13 is subject to Phosphothreonine. The segment covering 134–144 (EKKEKGKENSK) has biased composition (basic and acidic residues). The 60-residue stretch at 177–236 (VFPIGLGGLTVYSLGEIITNRPGFHDENAIYPVGYCSTRVYASMKCPDQKCLYTCQIKDG) folds into the FYR N-terminal domain. Residues 237-316 (GVQPQFEIVP…QNCVNYQWVK (80 aa)) enclose the FYR C-terminal domain.

It belongs to the TBRG1 family. Interacts with CDKN2A and MDM2. In terms of processing, ubiquitinated; mediated by MDM2 and leading to its subsequent proteasomal degradation.

The protein resides in the nucleus. Its function is as follows. Acts as a growth inhibitor. Can activate p53/TP53, causes G1 arrest and collaborates with CDKN2A to restrict proliferation, but does not require either protein to inhibit DNA synthesis. Redistributes CDKN2A into the nucleoplasm. Involved in maintaining chromosomal stability. The protein is Transforming growth factor beta regulator 1 (Tbrg1) of Mus musculus (Mouse).